Here is a 541-residue protein sequence, read N- to C-terminus: MEEVTSQEAAESPRGHFQPLENQSECLSPELRFLQDTDMEQGFSGGFPISKPDGISEREQDLQVFDLESKNREVIRGDCSDGETREENKLLIPKRKISEEVHSYKVRVGKFKQDIAQVPETREVYKSEDRLERLQEILRKFLFLEREFRQITISKKTFSSEKNTEPEKSFSLDSTLDTDQRVLRIQTTDDSKYDMNFNQNPAVGEQEPINLTENFQSTDYKESLMDLSHLNKWESMPTTDRSYKCDTCGKTFHQASALTRHQRIHTREKPYKCKECEKSFSQSSSLSRHKRIHTREKSYKCEASDKSCDAPDKSCSQSSDVLQHKKGHAKAKSYKCGTCERVFSRSVHLTQHQRTHKDMSCKCTVCGSDFCHTSYLVEHQRLHHQEKSYEYDECGLAYVKQQGIRFQEKPYSCNECGKDFRLNSHLIQHQRIHTGEKLHECNECGKSFSQTSCLIQHHKMHRKEKSYEYNNYEESFSHSSDLTLQQEVPIRERVFDCDAWEENFSQRAHLIQHERVHTKEKPYECSELGETFSQVQASFNM.

The tract at residues 1–22 (MEEVTSQEAAESPRGHFQPLEN) is disordered. 6 consecutive C2H2-type zinc fingers follow at residues 243–265 (YKCD…QRIH), 271–293 (YKCK…KRIH), 334–356 (YKCG…QRTH), 361–383 (CKCT…QRLH), 411–433 (YSCN…QRIH), and 439–461 (HECN…HKMH). Residues 495-517 (FDCDAWEENFSQRAHLIQHERVH) form a C2H2-type 7; degenerate zinc finger.

This sequence belongs to the krueppel C2H2-type zinc-finger protein family. Interacts with VAV1 and CDK4. Interacts with INTS13; promoting association with the integrator complex.

The protein resides in the nucleus. Its function is as follows. Probable transcription factor. In Mus musculus (Mouse), this protein is Zinc finger protein 655 (Znf655).